A 111-amino-acid polypeptide reads, in one-letter code: MKKLKSFGGKNLGGKSMNQLQKLQEEMQKKLQEVEEGFSNVEVDVSVGGGAIKIFATADRKVKDIEIDEDLLEDTETLNDLLIAGINELMEKIEKIREEEMAKITQNFLPF.

It belongs to the YbaB/EbfC family. As to quaternary structure, homodimer.

It localises to the cytoplasm. Its subcellular location is the nucleoid. In terms of biological role, binds to DNA and alters its conformation. May be involved in regulation of gene expression, nucleoid organization and DNA protection. The polypeptide is Nucleoid-associated protein Tmel_0542 (Thermosipho melanesiensis (strain DSM 12029 / CIP 104789 / BI429)).